We begin with the raw amino-acid sequence, 458 residues long: Cytoplasmic tRNA 2-thiolation protein 2 (458 aa).

The protein belongs to the CTU2/NCS2 family.

The protein localises to the cytoplasm. It participates in tRNA modification; 5-methoxycarbonylmethyl-2-thiouridine-tRNA biosynthesis. Its function is as follows. Plays a central role in 2-thiolation of mcm(5)S(2)U at tRNA wobble positions of tRNA(Lys), tRNA(Glu) and tRNA(Gln). May act by forming a heterodimer with NCS6/CTU1 that ligates sulfur from thiocarboxylated URM1 onto the uridine of tRNAs at wobble position. The protein is Cytoplasmic tRNA 2-thiolation protein 2 of Arabidopsis thaliana (Mouse-ear cress).